The primary structure comprises 217 residues: GTP-binding protein Rit2 (217 aa).

Residues 27-34 (GAGGVGKS), 74-78 (DTAGQ), and 133-136 (NKID) each bind GTP.

This sequence belongs to the small GTPase superfamily. Ras family. Interacts with PLXNB3. Interacts with AFDN, the C-terminal domain of RALGDS and RLF, but not with RIN1 and PIK3CA. RLF binds exclusively to the active GTP-bound form. Binds calmodulin. Interacts with POU4F1 (via N-terminus); the interaction controls POU4F1 transactivation activity on some neuronal target genes. In terms of tissue distribution, expressed in ganglion cell layer (GCL), inner plexiform layer (IPL) and inner nuclear layer (INL) of the retina. Expressed in retinal ganglion cells (RGCs). Expressed in horizontal, bipolar and amacrine cells, but not Mueller glia, of the INL (at protein level). Neuron-specific. Expressed in ganglion cell layer (GCL) and inner plexiform layer (IPL).

It is found in the nucleus. The protein localises to the cell membrane. It carries out the reaction GTP + H2O = GDP + phosphate + H(+). Alternates between an inactive form bound to GDP and an active form bound to GTP. Binds and exchanges GTP and GDP. Binds and modulates the activation of POU4F1 as gene expression regulator. This chain is GTP-binding protein Rit2 (Rit2), found in Mus musculus (Mouse).